Here is a 405-residue protein sequence, read N- to C-terminus: Neisseria adhesin A (405 aa).

The N-terminal stretch at 1-23 is a signal peptide; it reads MKHFPSKVLTTAILATFCSGALA. Positions 24–87 are head domain; that stretch reads ATNDDDVKKA…ADDFKGLGLK (64 aa). Coiled coils occupy residues 87–170 and 181–329; these read KKVV…KLEA and AFND…LRKE. The interval 88–350 is coiled stalk domain; the sequence is KVVTNLTKTV…SGLFQPYNVG (263 aa). The segment at 312 to 350 is outer membrane translocation of the passenger domain; sequence HDTRLNGLDKTVSDLRKETRQGLAEQAALSGLFQPYNVG. The next 4 beta stranded transmembrane spans lie at 350–360, 364–375, 382–388, and 394–405; these read GRFNVTAAVGG, ESAVAIGTGFRF, KAGVAVG, and SAAYHVGVNYEW. A translocator domain region spans residues 351-405; it reads RFNVTAAVGGYKSESAVAIGTGFRFTENFAAKAGVAVGTSSGSSAAYHVGVNYEW.

It belongs to the autotransporter-2 (AT-2) (TC 1.B.40) family. The non-membrane anchored protein (residues 24-350) probably forms a homotrimer; it is assumed the mature protein forms trimers in situ. The mature protein without the membrane-targeting segment (residues 24-350) binds to human heat shock 90 beta protein (HSP90AB1) both in vitro and when incubated with human monocytes. A subsequent paper showed binding of the same fragment in epithelial cells to both HSP90AA1 and HSP90AB1; in vitro the interaction is stabilized by ADP and the Hsp90 inhibitor 17-AAG (17-N-allylamino-17-demethoxygeldanamycin), in vitro and in vivo both interactions are inhibited by ATP. Binds human oxidized low-density lipoprotein receptor 1 (LOX-1, OLR1) in protein microarrays, in solution and when LOX-1 is expressed on the cell surface. Binds via the head and the beginning of the coiled stalk (residues 24-170); binding can be abrogated by monoclonal antibodies against those specific regions of NadA. Other potential binding partners were identified but not characterized in the same study. Forms high molecular weight oligomers in whole cell extracts that are not disrupted by boiling in SDS buffer.

The protein localises to the cell outer membrane. Its subcellular location is the cell surface. Adheres to and induces bacterial uptake by human epithelial cells in a microfilament-dependent process. Binding is reduced by pronase treatment, suggesting there is a protein receptor on the human cells. Possible human protein receptors include integrin beta-1 (ITGB1) and oxidized low-density lipoprotein receptor 1 (OLR1). Binds to extracellular human Hsp90 (preferentially the beta isoform, HSP90AB1) on monocytes, binding stimulates monocytes in a TLR4-dependent fashion, polymixin B, which binds NadA, blocks the activation. Hsp90 is probably not the first receptor on human monocytes. Non-membrane anchored protein (residues 24-350) is internalized into human epithelial cells by hijacking the endosome recycling pathway and may be recycled back to the cell surface, which might aid transcellular trafficking of the bacteria. A bacterial cell surface protein; antisera against this protein induce complement-mediated killing of this and other strains. The polypeptide is Neisseria adhesin A (Neisseria meningitidis serogroup B).